The chain runs to 82 residues: Sec-independent protein translocase protein TatA (82 aa).

Residues 1-21 (MGGISIWQLLIIAVIIVLLFG) traverse the membrane as a helical segment. The segment at 46–82 (DEPAKDAKKDADFVPQNLEKKEAETVEKQKQNDKEQA) is disordered.

This sequence belongs to the TatA/E family. In terms of assembly, the Tat system comprises two distinct complexes: a TatABC complex, containing multiple copies of TatA, TatB and TatC subunits, and a separate TatA complex, containing only TatA subunits. Substrates initially bind to the TatABC complex, which probably triggers association of the separate TatA complex to form the active translocon.

The protein resides in the cell inner membrane. Functionally, part of the twin-arginine translocation (Tat) system that transports large folded proteins containing a characteristic twin-arginine motif in their signal peptide across membranes. TatA could form the protein-conducting channel of the Tat system. This is Sec-independent protein translocase protein TatA from Aliivibrio fischeri (strain MJ11) (Vibrio fischeri).